Consider the following 240-residue polypeptide: Probable phosphatase Athe_0620 (240 aa).

Zn(2+) is bound by residues His8, His10, His16, His41, Glu74, His102, His132, Asp192, and His194.

This sequence belongs to the PHP family. It depends on Zn(2+) as a cofactor.

This Caldicellulosiruptor bescii (strain ATCC BAA-1888 / DSM 6725 / KCTC 15123 / Z-1320) (Anaerocellum thermophilum) protein is Probable phosphatase Athe_0620.